A 348-amino-acid polypeptide reads, in one-letter code: Dihydroorotase (348 aa).

Zn(2+) contacts are provided by His17 and His19. Substrate-binding positions include 19–21 (HLR) and Asn45. Positions 103, 140, and 178 each coordinate Zn(2+). Lys103 is modified (N6-carboxylysine). His140 is a substrate binding site. Leu223 lines the substrate pocket. Asp251 contacts Zn(2+). Residue Asp251 is part of the active site. Substrate contacts are provided by His255 and Ala267.

Belongs to the metallo-dependent hydrolases superfamily. DHOase family. Class II DHOase subfamily. As to quaternary structure, homodimer. Zn(2+) is required as a cofactor.

The catalysed reaction is (S)-dihydroorotate + H2O = N-carbamoyl-L-aspartate + H(+). It participates in pyrimidine metabolism; UMP biosynthesis via de novo pathway; (S)-dihydroorotate from bicarbonate: step 3/3. In terms of biological role, catalyzes the reversible cyclization of carbamoyl aspartate to dihydroorotate. This chain is Dihydroorotase, found in Salmonella heidelberg (strain SL476).